A 298-amino-acid chain; its full sequence is Homoserine kinase (298 aa).

83 to 93 (PISRGLGSSSS) contacts ATP.

This sequence belongs to the GHMP kinase family. Homoserine kinase subfamily.

It localises to the cytoplasm. The catalysed reaction is L-homoserine + ATP = O-phospho-L-homoserine + ADP + H(+). Its pathway is amino-acid biosynthesis; L-threonine biosynthesis; L-threonine from L-aspartate: step 4/5. Its function is as follows. Catalyzes the ATP-dependent phosphorylation of L-homoserine to L-homoserine phosphate. In Clostridium botulinum (strain Alaska E43 / Type E3), this protein is Homoserine kinase.